A 163-amino-acid chain; its full sequence is Crossover junction endodeoxyribonuclease RuvC (163 aa).

Catalysis depends on residues aspartate 7, glutamate 66, and aspartate 139. Residues aspartate 7, glutamate 66, and aspartate 139 each contribute to the Mg(2+) site.

Belongs to the RuvC family. Homodimer which binds Holliday junction (HJ) DNA. The HJ becomes 2-fold symmetrical on binding to RuvC with unstacked arms; it has a different conformation from HJ DNA in complex with RuvA. In the full resolvosome a probable DNA-RuvA(4)-RuvB(12)-RuvC(2) complex forms which resolves the HJ. Requires Mg(2+) as cofactor.

Its subcellular location is the cytoplasm. It catalyses the reaction Endonucleolytic cleavage at a junction such as a reciprocal single-stranded crossover between two homologous DNA duplexes (Holliday junction).. Functionally, the RuvA-RuvB-RuvC complex processes Holliday junction (HJ) DNA during genetic recombination and DNA repair. Endonuclease that resolves HJ intermediates. Cleaves cruciform DNA by making single-stranded nicks across the HJ at symmetrical positions within the homologous arms, yielding a 5'-phosphate and a 3'-hydroxyl group; requires a central core of homology in the junction. The consensus cleavage sequence is 5'-(A/T)TT(C/G)-3'. Cleavage occurs on the 3'-side of the TT dinucleotide at the point of strand exchange. HJ branch migration catalyzed by RuvA-RuvB allows RuvC to scan DNA until it finds its consensus sequence, where it cleaves and resolves the cruciform DNA. The chain is Crossover junction endodeoxyribonuclease RuvC from Thermomicrobium roseum (strain ATCC 27502 / DSM 5159 / P-2).